A 131-amino-acid polypeptide reads, in one-letter code: MERQPARTLWYDRPKYVFMEFCVEDSTDVSVLIEDHRVVFSCRNGDGVELYNEIEFYAKVNSKDSQDKRSGRSITCFVRKWKEKVAWPRLTKEDIKPVWLSVDFDNWRDWEGDDEVELAQVEHYAEDDSDS.

The region spanning 3–91 is the CS domain; that stretch reads RQPARTLWYD…KEKVAWPRLT (89 aa).

The protein belongs to the p23/wos2 family.

This is Putative protein PTGES3L (Ptges3l) from Mus musculus (Mouse).